Here is a 122-residue protein sequence, read N- to C-terminus: Small ribosomal subunit protein uS13 (122 aa).

Residues 99-122 (RGQRTHTNARTRKGPAKAIAGKKK) form a disordered region.

Belongs to the universal ribosomal protein uS13 family. Part of the 30S ribosomal subunit. Forms a loose heterodimer with protein S19. Forms two bridges to the 50S subunit in the 70S ribosome.

In terms of biological role, located at the top of the head of the 30S subunit, it contacts several helices of the 16S rRNA. In the 70S ribosome it contacts the 23S rRNA (bridge B1a) and protein L5 of the 50S subunit (bridge B1b), connecting the 2 subunits; these bridges are implicated in subunit movement. Contacts the tRNAs in the A and P-sites. The sequence is that of Small ribosomal subunit protein uS13 from Sinorhizobium fredii (strain NBRC 101917 / NGR234).